The chain runs to 683 residues: DNA ligase (683 aa).

NAD(+)-binding positions include 36–40 (DAVYD), 85–86 (SL), and Glu-121. The N6-AMP-lysine intermediate role is filled by Lys-123. Residues Arg-144, Glu-180, Lys-296, and Lys-320 each coordinate NAD(+). Residues Cys-413, Cys-416, Cys-431, and Cys-437 each contribute to the Zn(2+) site. The 79-residue stretch at 605–683 (PSEGHLSGKV…ESGWRVLAGL (79 aa)) folds into the BRCT domain.

It belongs to the NAD-dependent DNA ligase family. LigA subfamily. Mg(2+) is required as a cofactor. Mn(2+) serves as cofactor.

The enzyme catalyses NAD(+) + (deoxyribonucleotide)n-3'-hydroxyl + 5'-phospho-(deoxyribonucleotide)m = (deoxyribonucleotide)n+m + AMP + beta-nicotinamide D-nucleotide.. Its function is as follows. DNA ligase that catalyzes the formation of phosphodiester linkages between 5'-phosphoryl and 3'-hydroxyl groups in double-stranded DNA using NAD as a coenzyme and as the energy source for the reaction. It is essential for DNA replication and repair of damaged DNA. The sequence is that of DNA ligase from Gluconobacter oxydans (strain 621H) (Gluconobacter suboxydans).